The sequence spans 2754 residues: MAASERLYELWLLYYAQKDLGYLQQWLKAFVGAFKKSISLSSLEPRRPEEAGAEVPLLPLDELHVLAEQLHQADLEQALLLLKLFIILCRNLENIEAGRGQVLVPRVLALLTKLVAELKGCPPPQGRGTQLENVALHALLLCEGLFDPYQTWRRQRSGEVISSKEKSKYKFPPAALPQEFSAFFQESLQNADHLPPILLLRLIHLFCAVLAGGKENGQMAVSDGSVKGLLSVVRGWSRGPAPDPCLVPLALEALVGAVHVLHASRAPPRGPELRALLESYFHVLNADWPAGLSSGPEEALVTLRVSMLDAIPMMLACEDRPVLQATFLSNNCFEHLTRLIQNSKLYLQSRAPPEGDSDLATRLLTEPDVQKVLDQDTDAIAVHVVRVLTCIMSDSPSAKEVFKERIGYPHLQEVLQSHGPPTHRLLQELLNMAVEGDHSMCPPPPIRNEQPVLVLAQWLPSLPTAELRLFLAQRLRWLCDSCPASRATCVQAGLVGCLLETLSTGLALEARCQEQLLALLQALGRVSIRPMELRHLLRPRPGLDSEPGGAEAGKARHAGAVIRTLSGMARHQGPARALRYFDLTPSMAGIMVPPVQRWPGPGFTFHAWLCLHPMDTAPTPAPTRPLQRKQLYSFFTSSGSGFEAFFTAAGTLVVAVCTRKEYLTMSLPEVSFADSAWHCVAIVHVPGRRPFSQNLVHVYKDGHLVKTAPLRCPSLSEPFSSCCIGSAGYRTTTTTTGLPTPPVPATLAYTHPALTRSQSVPASTGLGWGSGLVAPLQEGSIDSTLAGTQDTRWGSPTSLEGELGAVAIFHEALQATALRTLCTLGPNETAPFKPEGELHELSTRLLLHYSPQACKNNICLDLSPSHGLDGRLTGHRVETWDVKDVVNCVGGMGALLPLLERVAAQPKEAEAGPAETHDLVGPELTSGHNTQGLVLPLGKSSEERMERNAVAAFLLMLRNFLQGHMVNQESLVQCQGPAIIGALLRKVPSWAMDMNVLMSAQLLMEQVAAEGSGPLLYLLYQHLLFNFHLWTLSDFAVRLGHIQYMSSIVREHRQKLRKKYGVQFILDALRTHYSPQRERPLAADDLRTVQTSLLGLAREFLVRSLSADDVQVTQTMLSFLAATGDDGQAVGALDLLLALLHGSLVQESLAVFLLEPGNLEVLLALLVRPGSLPLLPDRVCKILRRLQQNERLPERSRQRLRLRECGLQGLVACLPEGTVSPQLCQGLYKLFLGADCLNLSDLLAVVQLSLQADLSVRLDICRQLFHLIYGQPDVVRLLARQAGWQDVLTRLYVLEAATAGSPPPSSPESPTSPKPAPPKPPTESPAEPSDVFLPSEAPCPDPDGFYHALSPFCTPFDLGLERSSVGSGNTAGGGGSSGTLTPASQPGTPSPLDGPRPFPAAPGRHSSSLSNVLEDGSLPEPTISGDDTSNTSNPQQTSEEELCNLLTNVLFSVTWRGVEGSDEAAWRERGQVFSVLTQLGASATLVRPPDCIKRSLLEMMLESALTDIKEAPVGVLASLTQQALWLLRLLQDFLCAEGHGNQELWSEKLFEGVCSLLDRLGAWPHLANGTADLREMAQIGLRLVLGYILLEDPQLHAQAYVRLHMLLQTAVPARREEACYVLSKLEAALGRVLNTSSLESATDEAGSPLAAAAAAAAAERCSWLVPLVRTLLDRAYEPLGLQWGLPSLPPTNGSPTFFEDFQAFCATPEWRHFIDKQVQPTMSQFEMDTYAKSHDLMSGFWNACYDMLMSSGQRRQWERAQSRRAFQELVLEPAQRRARLEGLRYTAVLKQQATQHSMALLHWGALWRQLASPCGAWALRDTPIPRWKLSSAETYSRMRLKLVPNHHFDPHLEASALRDNLGEVPLTPTEEASLPLAVTKEAKVSTPPELLQEDQLGEDELAELETPMEAAELDEQREKLVLSAECQLVTVVAVVPGLLEVTTQNVYFYDGSTERVETEEGIGYDFRRPLAQLREVHLRRFNLRRSALELFFIDQANYFLNFPCKVGTTPVSSPSQTPRPQPGPIPPHTQVRNQVYSWLLRLRPPSQGYLSSRSPQEMLRASGLTQKWVQREISNFEYLMQLNTIAGRTYNDLSQYPVFPWVLQDYVSPTLDLSNPAVFRDLSKPIGVVNPKHAQLVREKYESFEDPAGTIDKFHYGTHYSNAAGVMHYLIRVEPFTSLHVQLQSGRFDCSDRQFHSVAAAWQARLESPADVKELIPEFFYFPDFLENQNGFDLGCLQLTNEKVGDVVLPPWASSPEDFIQQHRQALESEYVSAHLHEWIDLIFGYKQRGPAAEEALNVFYYCTYEGAVDLDHVTDERERKALEGIISNFGQTPCQLLKEPHPTRLSAEEAAHRLARLDTNSPSIFQHLDELKAFFAEVVSDGVPLVLALVPHRQPHSFITQGSPDLLVTVSASGLLGTHSWLPYDRNISNYFSFSKDPTMGSHKTQRLLSGPWVPGSGVSGQALAVAPDGKLLFSGGHWDGSLRVTALPRGKLLSQLSCHLDVVTCLALDTCGIYLISGSRDTTCMVWRLLHQGGLSVGLAPKPVQVLYGHGAAVSCVAISTELDMAVSGSEDGTVIIHTVRRGQFVAALRPLGATFPGPIFHLALGSEGQIVVQSSAWERPGAQVTYSLHLYSVNGKLRASLPLAEQPTALTVTEDFVLLGTAQCALHILQLNTLLPAAPPLPMKVAIRSVAVTKERSHVLVGLEDGKLIVVVAGQPSEVRSSQFARKLWRSSRRISQVSSGETEYNPTEAR.

Disordered regions lie at residues 1298-1338 and 1364-1438; these read TAGS…SEAP and SVGS…QQTS. Pro residues-rich tracts occupy residues 1301-1323 and 1388-1400; these read SPPP…PPTE and TPSP…PFPA. Positions 1425–1437 are enriched in polar residues; that stretch reads GDDTSNTSNPQQT. Ser-1647 is modified (phosphoserine). At Thr-1867 the chain carries Phosphothreonine. Positions 1915–2040 constitute a BEACH-type PH domain; the sequence is EQREKLVLSA…VRNQVYSWLL (126 aa). The region spanning 2053 to 2345 is the BEACH domain; that stretch reads RSPQEMLRAS…QLLKEPHPTR (293 aa). 7 WD repeats span residues 2386 to 2424, 2448 to 2491, 2494 to 2531, 2544 to 2582, 2589 to 2631, 2639 to 2674, and 2682 to 2717; these read LVLA…SWLP, RLLS…ALPR, LLSQ…VWRL, KPVQ…IHTV, AALR…TYSL, KLRA…ILQL, and PPLP…VVAG. Phosphoserine is present on residues Ser-2739 and Ser-2742.

The protein belongs to the WD repeat neurobeachin family. As to expression, expressed in megakaryocytes.

It is found in the endoplasmic reticulum. Probably involved in thrombopoiesis. Plays a role in the development or secretion of alpha-granules, that contain several growth factors important for platelet biogenesis. This Homo sapiens (Human) protein is Neurobeachin-like protein 2 (NBEAL2).